The sequence spans 121 residues: Large ribosomal subunit protein bL12 (121 aa).

This sequence belongs to the bacterial ribosomal protein bL12 family. In terms of assembly, homodimer. Part of the ribosomal stalk of the 50S ribosomal subunit. Forms a multimeric L10(L12)X complex, where L10 forms an elongated spine to which 2 to 4 L12 dimers bind in a sequential fashion. Binds GTP-bound translation factors.

Forms part of the ribosomal stalk which helps the ribosome interact with GTP-bound translation factors. Is thus essential for accurate translation. This is Large ribosomal subunit protein bL12 from Proteus mirabilis (strain HI4320).